Here is a 451-residue protein sequence, read N- to C-terminus: F-box/kelch-repeat protein At1g74510 (451 aa).

In terms of domain architecture, F-box spans 93 to 139; sequence SSPVTRLDQNALLNCLAHCSLSDFGSIASTNRTFRSLIKDSELYRLR. Kelch repeat units follow at residues 137-188, 193-236, 237-284, 286-333, and 349-395; these read RLRR…KESL, ELLV…SLGE, IAVI…FMDG, FYCI…DQAK, and AVVK…GMAF.

The polypeptide is F-box/kelch-repeat protein At1g74510 (Arabidopsis thaliana (Mouse-ear cress)).